We begin with the raw amino-acid sequence, 318 residues long: Sensor histidine kinase NatK (318 aa).

3 helical membrane passes run 4–24 (LFQCLYLILFSFICYQGAAAF), 27–47 (STAASWLAAALGAAAAGLYIW), and 72–82 (VGVVLIGTDIM). Residues 132–318 (RNHDTMKHIT…RLEIKIPFQK (187 aa)) enclose the Histidine kinase domain. Histidine 134 carries the phosphohistidine; by autocatalysis modification.

Its subcellular location is the cell membrane. The catalysed reaction is ATP + protein L-histidine = ADP + protein N-phospho-L-histidine.. In terms of biological role, member of the two-component regulatory system NatK/NatR that positively regulates the expression of the natAB operon. Potentially phosphorylates NatR. This is Sensor histidine kinase NatK from Bacillus subtilis (strain 168).